A 471-amino-acid chain; its full sequence is MQKEYKTITEISGPLVFAEVDEPVGYDEMVEIETPSGETRRGQVLESTSEFVAIQVFEGTSGIDRNSSVRFLGETLQMPLTEELLGRVLSGSGEPIDGGPEIEPDEEREIVGAAINPTAREYPEEFIQTGVSAIDGMNTLIRGQKLPIFSGSGLPHNELALQIARQASVPEEESGDDEAGSEFAVIFGAMGITQEEANEFMDDFERTGALERSVVFMNLADDPAVERTVTPRMALTTAEYLAFEEGYHVLVILTDMTNYCEALREIGAAREEVPGRRGYPGYMYTDLAQLYERAGRIEGREGSVTQIPILTMPGDDDTHPIPDLTGYITEGQIYIDRNLNSQGIEPPINVLPSLSRLMDDGIGEGFTREDHPDVSDQAYAAYAEGEDLRDLVNIVGREALSERDNKYLDFADRFEEEFVQQGYDTNRDVEETLDLAWELLSDLPKEELNRIDEEAIEEYYVEDEQAAQTAD.

This sequence belongs to the ATPase alpha/beta chains family. In terms of assembly, has multiple subunits with at least A(3), B(3), C, D, E, F, H, I and proteolipid K(x).

It is found in the cell membrane. Component of the A-type ATP synthase that produces ATP from ADP in the presence of a proton gradient across the membrane. The B chain is a regulatory subunit. The sequence is that of A-type ATP synthase subunit B from Natronomonas pharaonis (strain ATCC 35678 / DSM 2160 / CIP 103997 / JCM 8858 / NBRC 14720 / NCIMB 2260 / Gabara) (Halobacterium pharaonis).